The following is a 166-amino-acid chain: Small ribosomal subunit protein uS5 (166 aa).

An S5 DRBM domain is found at 11–74 (LQEKLIAVNR…EKARRNMMNV (64 aa)).

The protein belongs to the universal ribosomal protein uS5 family. As to quaternary structure, part of the 30S ribosomal subunit. Contacts proteins S4 and S8.

In terms of biological role, with S4 and S12 plays an important role in translational accuracy. Its function is as follows. Located at the back of the 30S subunit body where it stabilizes the conformation of the head with respect to the body. This is Small ribosomal subunit protein uS5 from Buchnera aphidicola subsp. Acyrthosiphon kondoi (Acyrthosiphon kondoi symbiotic bacterium).